The chain runs to 463 residues: Chromosomal replication initiator protein DnaA (463 aa).

A domain I, interacts with DnaA modulators region spans residues 1–83 (MNTNQIILTD…LQLFQHYNNT (83 aa)). The segment at 83–124 (TIKSIDIITKELPGTTQTVIELPTKTFADIGSSELNSENIFS) is domain II. The interval 125–343 (TLDVRFTFDN…GALNKVIAHS (219 aa)) is domain III, AAA+ region. ATP is bound by residues Gly171, Gly173, Lys174, and Thr175. Positions 344 to 463 (NFTLKEITLE…INLLMKILQH (120 aa)) are domain IV, binds dsDNA.

It belongs to the DnaA family. Oligomerizes as a right-handed, spiral filament on DNA at oriC.

The protein localises to the cytoplasm. Functionally, plays an essential role in the initiation and regulation of chromosomal replication. ATP-DnaA binds to the origin of replication (oriC) to initiate formation of the DNA replication initiation complex once per cell cycle. Binds the DnaA box (a 9 base pair repeat at the origin) and separates the double-stranded (ds)DNA. Forms a right-handed helical filament on oriC DNA; dsDNA binds to the exterior of the filament while single-stranded (ss)DNA is stabiized in the filament's interior. The ATP-DnaA-oriC complex binds and stabilizes one strand of the AT-rich DNA unwinding element (DUE), permitting loading of DNA polymerase. After initiation quickly degrades to an ADP-DnaA complex that is not apt for DNA replication. Binds acidic phospholipids. The polypeptide is Chromosomal replication initiator protein DnaA (Rickettsia akari (strain Hartford)).